The chain runs to 175 residues: Ribosome maturation factor RimM (175 aa).

Positions E96–F175 constitute a PRC barrel domain.

This sequence belongs to the RimM family. In terms of assembly, binds ribosomal protein uS19.

It is found in the cytoplasm. Functionally, an accessory protein needed during the final step in the assembly of 30S ribosomal subunit, possibly for assembly of the head region. Essential for efficient processing of 16S rRNA. May be needed both before and after RbfA during the maturation of 16S rRNA. It has affinity for free ribosomal 30S subunits but not for 70S ribosomes. This chain is Ribosome maturation factor RimM, found in Haemophilus influenzae (strain PittEE).